Reading from the N-terminus, the 501-residue chain is Tegument protein US24 (501 aa).

It belongs to the herpesviridae US22 family.

It is found in the virion tegument. The protein is Tegument protein US24 (US24) of Human cytomegalovirus (strain Merlin) (HHV-5).